Here is a 726-residue protein sequence, read N- to C-terminus: Methionine--tRNA ligase (726 aa).

The 'HIGH' region motif lies at 12-22 (PYVNNIPHLGN). 4 residues coordinate Zn(2+): cysteine 143, cysteine 146, cysteine 155, and cysteine 158. The 'KMSKS' region signature appears at 330–334 (KFSKS). Lysine 333 provides a ligand contact to ATP. Residues 562 to 667 (FSEKVCLKVV…DNPIPGERII (106 aa)) enclose the tRNA-binding domain.

Belongs to the class-I aminoacyl-tRNA synthetase family. MetG type 1 subfamily. Homodimer. Zn(2+) is required as a cofactor.

Its subcellular location is the cytoplasm. It carries out the reaction tRNA(Met) + L-methionine + ATP = L-methionyl-tRNA(Met) + AMP + diphosphate. Functionally, is required not only for elongation of protein synthesis but also for the initiation of all mRNA translation through initiator tRNA(fMet) aminoacylation. The sequence is that of Methionine--tRNA ligase from Borrelia turicatae (strain 91E135).